Reading from the N-terminus, the 299-residue chain is NAD kinase (299 aa).

Asp71 functions as the Proton acceptor in the catalytic mechanism. NAD(+) contacts are provided by residues 71–72 (DG), 145–146 (ND), Arg173, Asp175, 186–191 (TAYSLS), Ala210, and Gln248.

This sequence belongs to the NAD kinase family. A divalent metal cation serves as cofactor.

The protein localises to the cytoplasm. It carries out the reaction NAD(+) + ATP = ADP + NADP(+) + H(+). Functionally, involved in the regulation of the intracellular balance of NAD and NADP, and is a key enzyme in the biosynthesis of NADP. Catalyzes specifically the phosphorylation on 2'-hydroxyl of the adenosine moiety of NAD to yield NADP. This Bordetella pertussis (strain Tohama I / ATCC BAA-589 / NCTC 13251) protein is NAD kinase.